The sequence spans 252 residues: DNA repair protein RecO (252 aa).

Belongs to the RecO family.

Its function is as follows. Involved in DNA repair and RecF pathway recombination. The sequence is that of DNA repair protein RecO from Rhodospirillum rubrum (strain ATCC 11170 / ATH 1.1.1 / DSM 467 / LMG 4362 / NCIMB 8255 / S1).